A 311-amino-acid chain; its full sequence is uncharacterized protein (311 aa).

10 helical membrane passes run 13–33 (STAV…GFFS), 41–61 (FELV…CWLA), 76–96 (LQTL…FKSF), 103–123 (IAIS…SFFY), 128–148 (NVIS…ISGI), 157–177 (LMGS…FTTL), 192–212 (FLQT…GAFA), 218–238 (NWIM…LLFF), 248–268 (FISI…TVFT), and 272–292 (PDLY…LTLV). 2 consecutive EamA domains span residues 24–147 (VIFG…LISG) and 166–292 (VLAA…LTLV).

This sequence belongs to the EamA transporter family.

Its subcellular location is the cell membrane. This is an uncharacterized protein from Bacillus subtilis (strain 168).